The chain runs to 128 residues: Aspartate 1-decarboxylase (128 aa).

Residue serine 25 is the Schiff-base intermediate with substrate; via pyruvic acid of the active site. Serine 25 carries the pyruvic acid (Ser) modification. Threonine 57 provides a ligand contact to substrate. Tyrosine 58 acts as the Proton donor in catalysis. Residue 73-75 participates in substrate binding; it reads GAA.

The protein belongs to the PanD family. As to quaternary structure, heterooctamer of four alpha and four beta subunits. Pyruvate is required as a cofactor. Post-translationally, is synthesized initially as an inactive proenzyme, which is activated by self-cleavage at a specific serine bond to produce a beta-subunit with a hydroxyl group at its C-terminus and an alpha-subunit with a pyruvoyl group at its N-terminus.

Its subcellular location is the cytoplasm. It carries out the reaction L-aspartate + H(+) = beta-alanine + CO2. It functions in the pathway cofactor biosynthesis; (R)-pantothenate biosynthesis; beta-alanine from L-aspartate: step 1/1. In terms of biological role, catalyzes the pyruvoyl-dependent decarboxylation of aspartate to produce beta-alanine. The chain is Aspartate 1-decarboxylase from Chlorobium luteolum (strain DSM 273 / BCRC 81028 / 2530) (Pelodictyon luteolum).